A 266-amino-acid polypeptide reads, in one-letter code: Isopentenyl phosphate kinase (266 aa).

5–9 (KLGGS) lines the ATP pocket. A substrate-binding site is contributed by A47. G48 serves as a coordination point for ATP. 2 residues coordinate substrate: H52 and G157. ATP contacts are provided by residues D178, 183–188 (YTRNPK), G219, and K223.

The protein belongs to the isopentenyl phosphate kinase family. In terms of assembly, homodimer.

It carries out the reaction isopentenyl phosphate + ATP = isopentenyl diphosphate + ADP. Catalyzes the formation of isopentenyl diphosphate (IPP), the building block of all isoprenoids. Has lower activity with dimethylallyl phosphate (DMAP) and isopentenyl thiolophosphate (ISP). Has low activity with 1-butyl phosphate (BP) and 3-buten-1-yl phosphate (BEP). Has no significant activity with geranyl phosphate (in vitro). This Methanothermobacter thermautotrophicus (strain ATCC 29096 / DSM 1053 / JCM 10044 / NBRC 100330 / Delta H) (Methanobacterium thermoautotrophicum) protein is Isopentenyl phosphate kinase.